The following is a 652-amino-acid chain: tRNA-guanine(15) transglycosylase (652 aa).

Asp-88 (nucleophile) is an active-site residue. Positions 123 and 194 each coordinate substrate. Zn(2+)-binding residues include Cys-280, Cys-282, and Cys-285. Residues Lys-577 to Lys-652 form the PUA domain.

Belongs to the archaeosine tRNA-ribosyltransferase family. The cofactor is Zn(2+).

It carries out the reaction guanosine(15) in tRNA + 7-cyano-7-deazaguanine = 7-cyano-7-carbaguanosine(15) in tRNA + guanine. It participates in tRNA modification; archaeosine-tRNA biosynthesis. Exchanges the guanine residue with 7-cyano-7-deazaguanine (preQ0) at position 15 in the dihydrouridine loop (D-loop) of archaeal tRNAs. This is tRNA-guanine(15) transglycosylase from Methanococcus aeolicus (strain ATCC BAA-1280 / DSM 17508 / OCM 812 / Nankai-3).